The sequence spans 127 residues: Major sperm protein 63 (127 aa).

Alanine 2 carries the N-acetylalanine modification. The MSP domain occupies aspartate 9–asparagine 126.

Sperm.

It is found in the cell projection. The protein resides in the pseudopodium. Its subcellular location is the cytoplasm. The protein localises to the cytoskeleton. Central component in molecular interactions underlying sperm crawling. Forms an extensive filament system that extends from sperm villipoda, along the leading edge of the pseudopod. The chain is Major sperm protein 63 (msp-63) from Caenorhabditis elegans.